The primary structure comprises 367 residues: 1-deoxy-D-xylulose 5-phosphate reductoisomerase (367 aa).

NADPH contacts are provided by Thr-10, Gly-11, Ser-12, Ile-13, Gly-34, Lys-35, Asn-36, and Asn-112. Residue Lys-113 participates in 1-deoxy-D-xylulose 5-phosphate binding. Glu-114 provides a ligand contact to NADPH. Residue Asp-138 coordinates Mn(2+). Positions 139, 140, 164, and 186 each coordinate 1-deoxy-D-xylulose 5-phosphate. Glu-140 contacts Mn(2+). Gly-192 serves as a coordination point for NADPH. Ser-199, Asn-204, Lys-205, and Glu-208 together coordinate 1-deoxy-D-xylulose 5-phosphate. Position 208 (Glu-208) interacts with Mn(2+).

The protein belongs to the DXR family. Requires Mg(2+) as cofactor. Mn(2+) serves as cofactor.

The catalysed reaction is 2-C-methyl-D-erythritol 4-phosphate + NADP(+) = 1-deoxy-D-xylulose 5-phosphate + NADPH + H(+). Its pathway is isoprenoid biosynthesis; isopentenyl diphosphate biosynthesis via DXP pathway; isopentenyl diphosphate from 1-deoxy-D-xylulose 5-phosphate: step 1/6. Catalyzes the NADPH-dependent rearrangement and reduction of 1-deoxy-D-xylulose-5-phosphate (DXP) to 2-C-methyl-D-erythritol 4-phosphate (MEP). This Thermus thermophilus (strain ATCC BAA-163 / DSM 7039 / HB27) protein is 1-deoxy-D-xylulose 5-phosphate reductoisomerase.